Here is a 459-residue protein sequence, read N- to C-terminus: MNRLPSSASALACSAHALNLIEKRTLDHEEMKALNREVIEYFKEHVNPGFLEYRKSVTAGGDYGAVEWQAGGLNTLVDTQGQEFIDCLGGFGIFNVGHRNPVVVSAVQNQLAKQPLHSQELLDPLRAMLAKTLAALTPGKLKYSFFCNSGTESVEAALKLAKAYQSPRGKFTFIATSGVFHGKSLGALSATAKSTFRKPFMPLLPGFRHVPFGNIEAMRTALNECKKTGDDVAAVILEPIQGEGGVILPPPGYLTAVRKLCDEFGALMILDEVQTGMGRTGKMFACEHENVQPDILCLAKALGGGVMPIGATIATEEVFSVLFDNPFLHTTTFGGNPLACAAALATINVLLEQNLPAQAEQKGDMLLDGFRQLAREYPDLVQEARGKGMLMAIEFVDNEIGYNFASEMFRQRVLVAGTLNNAKTIRIEPPLTLTIEQCELVIKAARKALAAMRVSVEEA.

Residues 150–151 (GT) and glutamine 274 contribute to the pyridoxal 5'-phosphate site. Lysine 300 is subject to N6-(pyridoxal phosphate)lysine. Threonine 332 provides a ligand contact to pyridoxal 5'-phosphate.

This sequence belongs to the class-III pyridoxal-phosphate-dependent aminotransferase family. Putrescine aminotransferase subfamily. Pyridoxal 5'-phosphate is required as a cofactor.

It catalyses the reaction an alkane-alpha,omega-diamine + 2-oxoglutarate = an omega-aminoaldehyde + L-glutamate. The enzyme catalyses putrescine + 2-oxoglutarate = 1-pyrroline + L-glutamate + H2O. It carries out the reaction cadaverine + 2-oxoglutarate = 5-aminopentanal + L-glutamate. Its pathway is amine and polyamine degradation; putrescine degradation; 4-aminobutanal from putrescine (transaminase route): step 1/1. Catalyzes the aminotransferase reaction from putrescine to 2-oxoglutarate, leading to glutamate and 4-aminobutanal, which spontaneously cyclizes to form 1-pyrroline. This is the first step in one of two pathways for putrescine degradation, where putrescine is converted into 4-aminobutanoate (gamma-aminobutyrate or GABA) via 4-aminobutanal. Also functions as a cadaverine transaminase in a a L-lysine degradation pathway to succinate that proceeds via cadaverine, glutarate and L-2-hydroxyglutarate. This chain is Putrescine aminotransferase, found in Shigella flexneri serotype 5b (strain 8401).